A 351-amino-acid polypeptide reads, in one-letter code: Tsukushi-A (351 aa).

A signal peptide spans 1–17 (MALSSWIFFLLVHGIVG). 9 LRR repeats span residues 59 to 82 (PLDT…VLSG), 85 to 108 (YTTL…TFSK), 109 to 132 (LRYL…SFLY), 134 to 155 (RLTE…AFTL), 158 to 181 (QGRS…AERP), 182 to 203 (VPNI…DLHG), 204 to 226 (IPLR…SFLG), 252 to 276 (LTSL…MFFG), and 277 to 300 (LKAL…IMLH).

Interacts with bmp4. Interacts with dll1 (via extracellular region). Interacts with fgf8; inhibits fgf8 signaling. Interacts with nodal2/Xnr2; enhances nodal2 activity. In terms of tissue distribution, during embryogenesis, localized to the animal hemisphere during late blastula and gastrula stages. At stage 10, expression is also detected around the dorsal blastopore lip. Expressed in the mandibular crest segment, branchial crest segment and differentiating somites at stage 21/22. Expressed in the germ ring including the shield at shield stage and in the tailbud at the 10-somite stage. At the early neurula stage (stage 13), expression is hardly detectable in the presumptive neural plate region, and restricted to the non-neural ectoderm where its levels increase by stage 14, especially in the presumptive anterior neural fold. Also expressed in the prospective cranial neural crest. At the early tailbud stage (stage 23), expressed in cranial neural crest cells, the dorsal retina and the lens placode.

The protein localises to the secreted. Its function is as follows. Contributes to various developmental events through its interactions with multiple signaling pathways. Dorsalizing factor which functions as an inhibitor of bone morphogenetic proteins (BMP) during gastrulation. Promotes dll1-dependent activation of Notch signaling and is required for neural crest formation. Induces endoderm and dorsal mesoderm formation by enhancing nodal2/Xnr2 activity while inhibiting ventrolateral mesoderm formation through inhibition of fgf8. The polypeptide is Tsukushi-A (Xenopus laevis (African clawed frog)).